The following is a 239-amino-acid chain: Small ribosomal subunit protein uS3 (239 aa).

The region spanning isoleucine 39 to arginine 107 is the KH type-2 domain. The span at proline 212–glutamate 221 shows a compositional bias: basic and acidic residues. The tract at residues proline 212 to arginine 239 is disordered. The span at glycine 230–arginine 239 shows a compositional bias: gly residues.

Belongs to the universal ribosomal protein uS3 family. In terms of assembly, part of the 30S ribosomal subunit. Forms a tight complex with proteins S10 and S14.

Functionally, binds the lower part of the 30S subunit head. Binds mRNA in the 70S ribosome, positioning it for translation. The sequence is that of Small ribosomal subunit protein uS3 from Ruegeria sp. (strain TM1040) (Silicibacter sp.).